The following is a 368-amino-acid chain: tRNA-specific 2-thiouridylase MnmA (368 aa).

Residues 11 to 18 (GMSGGVDS) and M37 contribute to the ATP site. The interval 97-99 (NPD) is interaction with target base in tRNA. C102 serves as the catalytic Nucleophile. An intrachain disulfide couples C102 to C199. An ATP-binding site is contributed by G127. Residues 149 to 151 (KDQ) are interaction with tRNA. Catalysis depends on C199, which acts as the Cysteine persulfide intermediate. An interaction with tRNA region spans residues 311-312 (RY).

The protein belongs to the MnmA/TRMU family. In terms of assembly, interacts with TusE.

The protein resides in the cytoplasm. The enzyme catalyses S-sulfanyl-L-cysteinyl-[protein] + uridine(34) in tRNA + AH2 + ATP = 2-thiouridine(34) in tRNA + L-cysteinyl-[protein] + A + AMP + diphosphate + H(+). In terms of biological role, catalyzes the 2-thiolation of uridine at the wobble position (U34) of tRNA(Lys), tRNA(Glu) and tRNA(Gln), leading to the formation of s(2)U34, the first step of tRNA-mnm(5)s(2)U34 synthesis. Sulfur is provided by IscS, via a sulfur-relay system. Binds ATP and its substrate tRNAs. The chain is tRNA-specific 2-thiouridylase MnmA from Salmonella paratyphi B (strain ATCC BAA-1250 / SPB7).